A 310-amino-acid polypeptide reads, in one-letter code: Cysteine synthase (310 aa).

The residue at position 46 (Lys-46) is an N6-(pyridoxal phosphate)lysine. Pyridoxal 5'-phosphate-binding positions include Asn-76, 180-184 (GTGGT), and Ser-268.

This sequence belongs to the cysteine synthase/cystathionine beta-synthase family. In terms of assembly, homodimer. Pyridoxal 5'-phosphate is required as a cofactor.

It catalyses the reaction O-acetyl-L-serine + hydrogen sulfide = L-cysteine + acetate. It functions in the pathway amino-acid biosynthesis; L-cysteine biosynthesis; L-cysteine from L-serine: step 2/2. The polypeptide is Cysteine synthase (cysK) (Staphylococcus epidermidis (strain ATCC 35984 / DSM 28319 / BCRC 17069 / CCUG 31568 / BM 3577 / RP62A)).